Reading from the N-terminus, the 557-residue chain is Kelch repeat and BTB domain-containing protein 2 (557 aa).

The BTB domain occupies 26–95; the sequence is CDVIITIGDG…LYNRHISSMN (70 aa). The BACK domain occupies 133-223; sequence HKLYEMVHIP…CIDIQNLDKK (91 aa). 3 Kelch repeats span residues 305 to 352, 353 to 399, and 401 to 464; these read EIII…VIDD, TIYA…VLDQ, and IYII…SHKD.

Interacts (via BTB domain) with host CUL3.

The protein localises to the host cytoplasm. Probable substrate-specific adapter of CUL3-containing E3 ubiquitin-protein ligases which mediate the ubiquitination and subsequent proteasomal degradation of host target proteins. In Bos taurus (Bovine), this protein is Kelch repeat and BTB domain-containing protein 2 (KBTB2).